A 20-amino-acid polypeptide reads, in one-letter code: Isocitrate dehydrogenase [NADP] (20 aa).

The protein belongs to the isocitrate and isopropylmalate dehydrogenases family. Mn(2+) is required as a cofactor. It depends on Mg(2+) as a cofactor.

The protein localises to the cytoplasm. It carries out the reaction D-threo-isocitrate + NADP(+) = 2-oxoglutarate + CO2 + NADPH. In Naegleria fowleri (Brain eating amoeba), this protein is Isocitrate dehydrogenase [NADP].